Here is a 416-residue protein sequence, read N- to C-terminus: 46 kDa surface antigen (416 aa).

A signal peptide spans 1–27 (MLRKKFLYSSAIYATSLASIIAFVAAG). Cys28 is lipidated: N-palmitoyl cysteine. Cys28 is lipidated: S-diacylglycerol cysteine.

It localises to the cell membrane. The polypeptide is 46 kDa surface antigen (p46) (Mesomycoplasma hyopneumoniae (strain 232) (Mycoplasma hyopneumoniae)).